The following is a 139-amino-acid chain: D-ribose pyranase (139 aa).

Catalysis depends on histidine 20, which acts as the Proton donor. Residues aspartate 28, histidine 106, and 128-130 (YAN) contribute to the substrate site.

This sequence belongs to the RbsD / FucU family. RbsD subfamily. Homodecamer.

The protein resides in the cytoplasm. It carries out the reaction beta-D-ribopyranose = beta-D-ribofuranose. Its pathway is carbohydrate metabolism; D-ribose degradation; D-ribose 5-phosphate from beta-D-ribopyranose: step 1/2. Its function is as follows. Catalyzes the interconversion of beta-pyran and beta-furan forms of D-ribose. The protein is D-ribose pyranase of Salmonella agona (strain SL483).